The sequence spans 122 residues: Large ribosomal subunit protein uL14 (122 aa).

As to quaternary structure, forms a cluster with proteins L3 and L19. In the 70S ribosome, L14 and L19 interact and together make contacts with the 16S rRNA in bridges B5 and B8. Part of the 50S ribosomal subunit.

Its function is as follows. Binds to 23S rRNA. Forms part of two intersubunit bridges in the 70S ribosome. In Rhodopseudomonas palustris (strain ATCC BAA-98 / CGA009), this protein is Large ribosomal subunit protein uL14.